We begin with the raw amino-acid sequence, 461 residues long: tRNA modification GTPase MnmE (461 aa).

Residues arginine 22, glutamate 87, and arginine 126 each coordinate (6S)-5-formyl-5,6,7,8-tetrahydrofolate. The TrmE-type G domain occupies 222-382; the sequence is GLKTVIVGKP…LEETIFNMVV (161 aa). Position 232 (asparagine 232) interacts with K(+). GTP is bound by residues 232–237, 251–257, and 276–279; these read NVGKSS, TDIPGTT, and DTAG. Serine 236 serves as a coordination point for Mg(2+). K(+) contacts are provided by threonine 251, isoleucine 253, and threonine 256. Threonine 257 provides a ligand contact to Mg(2+). Residue lysine 461 participates in (6S)-5-formyl-5,6,7,8-tetrahydrofolate binding.

It belongs to the TRAFAC class TrmE-Era-EngA-EngB-Septin-like GTPase superfamily. TrmE GTPase family. In terms of assembly, homodimer. Heterotetramer of two MnmE and two MnmG subunits. Requires K(+) as cofactor.

The protein resides in the cytoplasm. In terms of biological role, exhibits a very high intrinsic GTPase hydrolysis rate. Involved in the addition of a carboxymethylaminomethyl (cmnm) group at the wobble position (U34) of certain tRNAs, forming tRNA-cmnm(5)s(2)U34. This Desulforamulus reducens (strain ATCC BAA-1160 / DSM 100696 / MI-1) (Desulfotomaculum reducens) protein is tRNA modification GTPase MnmE.